A 486-amino-acid chain; its full sequence is Palmitoleoyl-protein carboxylesterase notum2 (486 aa).

Residues 1-18 (MRILEIFAILLILKEVRP) form the signal peptide. N-linked (GlcNAc...) asparagine glycosylation is present at Asn-183. Residues Ser-223, Asp-331, and His-380 each act as charge relay system in the active site.

Belongs to the pectinacetylesterase family. Notum subfamily.

It is found in the secreted. The catalysed reaction is [Wnt protein]-O-(9Z)-hexadecenoyl-L-serine + H2O = [Wnt protein]-L-serine + (9Z)-hexadecenoate + H(+). Functionally, carboxylesterase that acts as a key negative regulator of the Wnt signaling pathway by specifically mediating depalmitoleoylation of WNT proteins. Serine palmitoleoylation of WNT proteins is required for efficient binding to frizzled receptors. The protein is Palmitoleoyl-protein carboxylesterase notum2 of Xenopus laevis (African clawed frog).